A 176-amino-acid chain; its full sequence is N-alpha-acetyltransferase NAT5 (176 aa).

The region spanning 14–176 is the N-acetyltransferase domain; sequence NNLGMLTKLA…DAILLKKHIS (163 aa).

Belongs to the acetyltransferase family. As to quaternary structure, component of the N-terminal acetyltransferase A (NatA) complex, which is composed of ARD1, NAT1 and NAT5.

It is found in the cytoplasm. It carries out the reaction N-terminal L-methionyl-L-alanyl-[protein] + acetyl-CoA = N-terminal N(alpha)-acetyl-L-methionyl-L-alanyl-[protein] + CoA + H(+). It catalyses the reaction N-terminal L-methionyl-L-seryl-[protein] + acetyl-CoA = N-terminal N(alpha)-acetyl-L-methionyl-L-seryl-[protein] + CoA + H(+). The enzyme catalyses N-terminal L-methionyl-L-valyl-[protein] + acetyl-CoA = N-terminal N(alpha)-acetyl-L-methionyl-L-valyl-[protein] + CoA + H(+). The catalysed reaction is N-terminal L-methionyl-L-threonyl-[protein] + acetyl-CoA = N-terminal N(alpha)-acetyl-L-methionyl-L-threonyl-[protein] + CoA + H(+). It carries out the reaction N-terminal L-methionyl-L-lysyl-[protein] + acetyl-CoA = N-terminal N(alpha)-acetyl-L-methionyl-L-lysyl-[protein] + CoA + H(+). It catalyses the reaction N-terminal L-methionyl-L-leucyl-[protein] + acetyl-CoA = N-terminal N(alpha)-acetyl-L-methionyl-L-leucyl-[protein] + CoA + H(+). The enzyme catalyses N-terminal L-methionyl-L-phenylalanyl-[protein] + acetyl-CoA = N-terminal N(alpha)-acetyl-L-methionyl-L-phenylalanyl-[protein] + CoA + H(+). The catalysed reaction is N-terminal L-methionyl-L-tyrosyl-[protein] + acetyl-CoA = N-terminal N(alpha)-acetyl-L-methionyl-L-tyrosyl-[protein] + CoA + H(+). N-alpha-acetyltransferase that acetylates the N-terminus of proteins that retain their initiating methionine. Has a broad substrate specificity: able to acetylate the initiator methionine of most peptides. Non-essential component of the NatA N-terminal acetyltransferase. In Saccharomyces cerevisiae (strain ATCC 204508 / S288c) (Baker's yeast), this protein is N-alpha-acetyltransferase NAT5.